A 305-amino-acid polypeptide reads, in one-letter code: Ornithine carbamoyltransferase (305 aa).

Carbamoyl phosphate is bound by residues 50-53 (STRT), Gln-77, Arg-101, and 128-131 (HPCQ). L-ornithine-binding positions include Asn-162, Asp-220, and 224 to 225 (SM). Residues 260–261 (CL) and Arg-288 each bind carbamoyl phosphate.

It belongs to the aspartate/ornithine carbamoyltransferase superfamily. OTCase family.

It localises to the cytoplasm. It catalyses the reaction carbamoyl phosphate + L-ornithine = L-citrulline + phosphate + H(+). Its pathway is amino-acid degradation; L-arginine degradation via ADI pathway; carbamoyl phosphate from L-arginine: step 2/2. Functionally, reversibly catalyzes the transfer of the carbamoyl group from carbamoyl phosphate (CP) to the N(epsilon) atom of ornithine (ORN) to produce L-citrulline. The chain is Ornithine carbamoyltransferase from Akkermansia muciniphila (strain ATCC BAA-835 / DSM 22959 / JCM 33894 / BCRC 81048 / CCUG 64013 / CIP 107961 / Muc).